We begin with the raw amino-acid sequence, 128 residues long: Glyoxylase-like domain-containing protein (128 aa).

One can recognise a VOC domain in the interval 6–125 (QISGIEIPAT…EGNTHAICTR (120 aa)).

It participates in mycotoxin biosynthesis. Glyoxylase-like domain-containing protein; part of the gene cluster that mediates the biosynthesis of the selective antifungal agent ascochitine, an o-quinone methide that plays a possible protective role against other microbial competitors in nature and is considered to be important for pathogenicity of legume-associated Didymella species. The pathway probably begins with the synthesis of a keto-aldehyde intermediate by the ascochitine non-reducing polyketide synthase pksAC from successive condensations of 4 malonyl-CoA units, presumably with a simple acetyl-CoA starter unit. Release of the keto-aldehyde intermediate is consistent with the presence of the C-terminal reductive release domain. The HR-PKS (orf7) probably makes a diketide starter unit which is passed to the non-reducing polyketide synthase pksAC for further extension, producing ascochital and ascochitine. The aldehyde dehydrogenase (orf1), the 2-oxoglutarate-dependent dioxygenase (orf3) and the dehydrogenase (orf9) are probably involved in subsequent oxidations of methyl groups to the carboxylic acid of the heterocyclic ring. The ascochitine gene cluster also includes a gene encoding a short peptide with a cupin domain (orf2) that is often found in secondary metabolite gene clusters and which function has still to be determined. In Didymella fabae (Leaf and pod spot disease fungus), this protein is Glyoxylase-like domain-containing protein.